The chain runs to 1412 residues: Ecdysone-induced protein 75B, isoform B (1412 aa).

Low complexity predominate over residues 1–14; that stretch reads MEAVQAAAAATSSG. Disordered regions lie at residues 1–96, 110–204, 258–298, and 321–448; these read MEAV…PGGT, QRAT…QQHV, QYQQ…VPPP, and HFQQ…SIPD. Positions 15-25 are enriched in gly residues; sequence GSSGSVPGSGS. The segment covering 32-57 has biased composition (basic and acidic residues); it reads IKTEPIDFEMLHLEENERQQDIEREP. Over residues 58 to 68 the composition is skewed to low complexity; that stretch reads SSSNSNSNSNS. A compositionally biased stretch (polar residues) spans 69 to 81; the sequence is LTPQRYTHVQVQT. Residues 87–96 are compositionally biased toward low complexity; it reads PTGLTTPGGT. Polar residues predominate over residues 124 to 133; the sequence is YSQQQGTAAS. Residues 135 to 150 show a composition bias toward low complexity; it reads SAPPETTALLTTTSGT. The segment covering 151 to 164 has biased composition (polar residues); sequence PQIIITRTLPSNQH. Low complexity predominate over residues 177-203; it reads HHYQQQQPQRQQSPPPLHHQQQQQQQH. Positions 266–284 are enriched in pro residues; that stretch reads PLAPPPPPPPPPPPPPPPQ. Low complexity-rich tracts occupy residues 323 to 371, 378 to 403, and 417 to 447; these read QQQQ…SSHI, SSSS…NSVM, and ASSS…SSIP. A DNA-binding region (nuclear receptor) is located at residues 455-531; that stretch reads TVLCRVCGDK…VGMSRDAVRF (77 aa). 2 consecutive NR C4-type zinc fingers follow at residues 458–478 and 495–514; these read CRVC…CEGC and CTKN…CQYC. Positions 565–813 constitute an NR LBD domain; sequence DQPRLLAAVL…QQMWSMEDGN (249 aa). Disordered regions lie at residues 837–878, 984–1021, 1044–1064, 1108–1174, 1204–1317, and 1368–1401; these read KSPL…SALA, LDSP…SVDD, VSVS…KRQI, AEAD…SSHS, ENST…SNSA, and VTVT…NPGL. Composition is skewed to low complexity over residues 854 to 866, 1005 to 1017, 1044 to 1058, 1110 to 1155, and 1163 to 1174; these read GSPS…GVSL, SSGG…SPRS, VSVS…STSS, ADAS…AQSQ, and SSPKASMASSHS. 2 stretches are compositionally biased toward polar residues: residues 1206–1219 and 1231–1253; these read STAA…VGNR and AVQN…QRQQ. 3 stretches are compositionally biased toward low complexity: residues 1254–1290, 1299–1317, and 1372–1400; these read SVSP…SASS, STSN…SNSA, and ASNG…PNPG.

This sequence belongs to the nuclear hormone receptor family. NR1 subfamily.

The protein resides in the nucleus. Implicated in the regulation of ecdysone-triggered gene hierarchies. Probably plays a key role in mediating the regulation of the larval molt by 20-OH-ecdysone. This is Ecdysone-induced protein 75B, isoform B (Eip75B) from Drosophila melanogaster (Fruit fly).